The sequence spans 399 residues: Acetate kinase (399 aa).

Position 7 (Asn-7) interacts with Mg(2+). Lys-14 is an ATP binding site. Arg-90 is a binding site for substrate. Asp-147 serves as the catalytic Proton donor/acceptor. Residues 207-211 (HLGNG), 282-284 (DFR), and 330-334 (GIGEN) each bind ATP. Glu-385 is a binding site for Mg(2+).

The protein belongs to the acetokinase family. As to quaternary structure, homodimer. The cofactor is Mg(2+). It depends on Mn(2+) as a cofactor.

Its subcellular location is the cytoplasm. The catalysed reaction is acetate + ATP = acetyl phosphate + ADP. It participates in metabolic intermediate biosynthesis; acetyl-CoA biosynthesis; acetyl-CoA from acetate: step 1/2. In terms of biological role, catalyzes the formation of acetyl phosphate from acetate and ATP. Can also catalyze the reverse reaction. In Caldicellulosiruptor bescii (strain ATCC BAA-1888 / DSM 6725 / KCTC 15123 / Z-1320) (Anaerocellum thermophilum), this protein is Acetate kinase.